The sequence spans 549 residues: Glucose-6-phosphate isomerase (549 aa).

Glu355 serves as the catalytic Proton donor. Residues His386 and Lys514 contribute to the active site.

This sequence belongs to the GPI family.

The protein resides in the cytoplasm. The enzyme catalyses alpha-D-glucose 6-phosphate = beta-D-fructose 6-phosphate. Its pathway is carbohydrate biosynthesis; gluconeogenesis. The protein operates within carbohydrate degradation; glycolysis; D-glyceraldehyde 3-phosphate and glycerone phosphate from D-glucose: step 2/4. Functionally, catalyzes the reversible isomerization of glucose-6-phosphate to fructose-6-phosphate. This chain is Glucose-6-phosphate isomerase, found in Salmonella agona (strain SL483).